The following is a 51-amino-acid chain: uncharacterized protein (51 aa).

This is an uncharacterized protein from Saccharomyces cerevisiae (strain ATCC 204508 / S288c) (Baker's yeast).